A 402-amino-acid polypeptide reads, in one-letter code: CCA-adding enzyme (402 aa).

Residues G32 and R35 each coordinate ATP. Positions 32 and 35 each coordinate CTP. The Mg(2+) site is built by D45 and D47. ATP contacts are provided by R116, D159, R162, R165, and R168. 5 residues coordinate CTP: R116, D159, R162, R165, and R168.

The protein belongs to the tRNA nucleotidyltransferase/poly(A) polymerase family. Bacterial CCA-adding enzyme type 3 subfamily. In terms of assembly, homodimer. It depends on Mg(2+) as a cofactor.

It catalyses the reaction a tRNA precursor + 2 CTP + ATP = a tRNA with a 3' CCA end + 3 diphosphate. It carries out the reaction a tRNA with a 3' CCA end + 2 CTP + ATP = a tRNA with a 3' CCACCA end + 3 diphosphate. Its function is as follows. Catalyzes the addition and repair of the essential 3'-terminal CCA sequence in tRNAs without using a nucleic acid template. Adds these three nucleotides in the order of C, C, and A to the tRNA nucleotide-73, using CTP and ATP as substrates and producing inorganic pyrophosphate. tRNA 3'-terminal CCA addition is required both for tRNA processing and repair. Also involved in tRNA surveillance by mediating tandem CCA addition to generate a CCACCA at the 3' terminus of unstable tRNAs. While stable tRNAs receive only 3'-terminal CCA, unstable tRNAs are marked with CCACCA and rapidly degraded. This chain is CCA-adding enzyme, found in Streptococcus pyogenes serotype M1.